Consider the following 943-residue polypeptide: Isoleucine--tRNA ligase (943 aa).

Positions 59–69 (PYANGRIHLGH) match the 'HIGH' region motif. Position 577 (Glu-577) interacts with L-isoleucyl-5'-AMP. Residues 618-622 (KMSKS) carry the 'KMSKS' region motif. Lys-621 serves as a coordination point for ATP. Cys-906, Cys-909, Cys-926, and Cys-929 together coordinate Zn(2+).

Belongs to the class-I aminoacyl-tRNA synthetase family. IleS type 1 subfamily. In terms of assembly, monomer. Zn(2+) serves as cofactor.

Its subcellular location is the cytoplasm. It carries out the reaction tRNA(Ile) + L-isoleucine + ATP = L-isoleucyl-tRNA(Ile) + AMP + diphosphate. In terms of biological role, catalyzes the attachment of isoleucine to tRNA(Ile). As IleRS can inadvertently accommodate and process structurally similar amino acids such as valine, to avoid such errors it has two additional distinct tRNA(Ile)-dependent editing activities. One activity is designated as 'pretransfer' editing and involves the hydrolysis of activated Val-AMP. The other activity is designated 'posttransfer' editing and involves deacylation of mischarged Val-tRNA(Ile). The polypeptide is Isoleucine--tRNA ligase (Stenotrophomonas maltophilia (strain R551-3)).